We begin with the raw amino-acid sequence, 485 residues long: Argininosuccinate lyase (485 aa).

It belongs to the lyase 1 family. Argininosuccinate lyase subfamily.

The protein localises to the cytoplasm. The enzyme catalyses 2-(N(omega)-L-arginino)succinate = fumarate + L-arginine. Its pathway is amino-acid biosynthesis; L-arginine biosynthesis; L-arginine from L-ornithine and carbamoyl phosphate: step 3/3. The chain is Argininosuccinate lyase from Halobacterium salinarum (strain ATCC 29341 / DSM 671 / R1).